Here is a 688-residue protein sequence, read N- to C-terminus: Methionine--tRNA ligase (688 aa).

The 'HIGH' region motif lies at 13 to 23 (PYANGPIHIGH). Zn(2+) is bound by residues Cys144, Cys147, Cys157, and Cys160. Positions 334-338 (KMSKS) match the 'KMSKS' region motif. ATP is bound at residue Lys337. The 107-residue stretch at 582–688 (DFAKIDLRVA…AGAVPGMRVR (107 aa)) folds into the tRNA-binding domain.

It belongs to the class-I aminoacyl-tRNA synthetase family. MetG type 1 subfamily. Homodimer. It depends on Zn(2+) as a cofactor.

The protein localises to the cytoplasm. The catalysed reaction is tRNA(Met) + L-methionine + ATP = L-methionyl-tRNA(Met) + AMP + diphosphate. Functionally, is required not only for elongation of protein synthesis but also for the initiation of all mRNA translation through initiator tRNA(fMet) aminoacylation. The protein is Methionine--tRNA ligase of Ralstonia nicotianae (strain ATCC BAA-1114 / GMI1000) (Ralstonia solanacearum).